We begin with the raw amino-acid sequence, 236 residues long: ATP phosphoribosyltransferase (236 aa).

The protein belongs to the ATP phosphoribosyltransferase family. Short subfamily. As to quaternary structure, heteromultimer composed of HisG and HisZ subunits.

It localises to the cytoplasm. It catalyses the reaction 1-(5-phospho-beta-D-ribosyl)-ATP + diphosphate = 5-phospho-alpha-D-ribose 1-diphosphate + ATP. Its pathway is amino-acid biosynthesis; L-histidine biosynthesis; L-histidine from 5-phospho-alpha-D-ribose 1-diphosphate: step 1/9. Catalyzes the condensation of ATP and 5-phosphoribose 1-diphosphate to form N'-(5'-phosphoribosyl)-ATP (PR-ATP). Has a crucial role in the pathway because the rate of histidine biosynthesis seems to be controlled primarily by regulation of HisG enzymatic activity. This is ATP phosphoribosyltransferase (hisG) from Cereibacter sphaeroides (strain ATCC 17023 / DSM 158 / JCM 6121 / CCUG 31486 / LMG 2827 / NBRC 12203 / NCIMB 8253 / ATH 2.4.1.) (Rhodobacter sphaeroides).